The following is a 351-amino-acid chain: Tryptophan--tRNA ligase (351 aa).

ATP-binding positions include 11–13 and 19–20; these read RPT and GH. Residues 12–20 carry the 'HIGH' region motif; sequence PTGALHLGH. D139 contributes to the L-tryptophan binding site. Residues 151–153, L190, and 198–202 each bind ATP; these read GRD and KMSKS. The short motif at 198-202 is the 'KMSKS' region element; the sequence is KMSKS.

This sequence belongs to the class-I aminoacyl-tRNA synthetase family. As to quaternary structure, homodimer.

It is found in the cytoplasm. It catalyses the reaction tRNA(Trp) + L-tryptophan + ATP = L-tryptophyl-tRNA(Trp) + AMP + diphosphate + H(+). In terms of biological role, catalyzes the attachment of tryptophan to tRNA(Trp). The chain is Tryptophan--tRNA ligase from Borreliella burgdorferi (strain ATCC 35210 / DSM 4680 / CIP 102532 / B31) (Borrelia burgdorferi).